Reading from the N-terminus, the 150-residue chain is Ribosome-binding factor A (150 aa).

Residues 126–150 form a disordered region; the sequence is EVARDLSHDDDEDGGADEAPRNGDE.

It belongs to the RbfA family. In terms of assembly, monomer. Binds 30S ribosomal subunits, but not 50S ribosomal subunits or 70S ribosomes.

Its subcellular location is the cytoplasm. Its function is as follows. One of several proteins that assist in the late maturation steps of the functional core of the 30S ribosomal subunit. Associates with free 30S ribosomal subunits (but not with 30S subunits that are part of 70S ribosomes or polysomes). Required for efficient processing of 16S rRNA. May interact with the 5'-terminal helix region of 16S rRNA. The polypeptide is Ribosome-binding factor A (Brucella suis (strain ATCC 23445 / NCTC 10510)).